Consider the following 580-residue polypeptide: Micronemal protein 4 (580 aa).

The first 25 residues, 1–25 (MRASLPVHLVVCTQLSAVWFGVAKA), serve as a signal peptide directing secretion. Apple domains lie at 68-137 (CVHS…SRSC), 141-214 (CFEQ…KQFC), 232-301 (CIQL…PKSC), 305-375 (CFSN…VTVG), 419-488 (CVHT…SRTC), and 492-565 (CLRR…YTFC). 15 cysteine pairs are disulfide-bonded: C68–C137, C93–C115, C97–C103, C141–C214, C166–C188, C170–C176, C232–C301, C257–C279, C261–C267, C305–C380, C332–C354, C336–C342, C419–C488, C444–C466, and C448–C454.

In terms of assembly, monomer. Part of the MIC6-MIC1-MIC4 complex. Interacts (via the second apple domain) directly with MIC1 (via the beta-finger region). Interacts with murine TLR2; the interaction promotes activation of bone marrow-derived dendritic cells and macrophages in the host. Interacts with murine TLR4; the interaction promotes activation of bone marrow-derived dendritic cells and macrophages in the host. In terms of processing, proteolytically cleaved at the N- and C-terminus after release from the microneme.

It is found in the cytoplasmic vesicle. The protein resides in the secretory vesicle. Its subcellular location is the microneme. It localises to the host early endosome. Its activity is regulated as follows. Lacto-N-biose inhibits binding to asialofetuin, a host glycoprotein. Soluble adhesin with carbohydrate-binding activity. Binds to galactose-terminating oligosaccharides. Required for attachment of the parasite to the host cell prior to invasion. Triggers the activation of murine bone marrow-derived dendritic cells and macrophages and production of pro-inflammatory cytokines, such as IL12 (IL12B/IL12A), in host TLR2/TLR4-dependent manner. Triggers the production of anti-inflammatory cytokine IL10 in murine bone marrow-derived macrophages in host TLR4-dependent manner. Induces transient endotoxin tolerance in murine bone marrow-derived macrophages, manifested by reduced TNF-alpha (TNF) production in response to challenge with lipopolysaccharides (LPS). The protein is Micronemal protein 4 of Toxoplasma gondii.